The chain runs to 861 residues: Bifunctional uridylyltransferase/uridylyl-removing enzyme (861 aa).

The tract at residues 1–321 (MKNDNRIIKN…VYHQKQKIIR (321 aa)) is uridylyltransferase. The tract at residues 322 to 678 (LDDEFQLSNR…IMPHHSQGGT (357 aa)) is uridylyl-removing. In terms of domain architecture, HD spans 440-562 (VDQHTLFVIR…LPHARYLDYL (123 aa)). ACT domains follow at residues 679 to 760 (EVFI…AVSR) and 788 to 861 (QLFL…KSKY).

The protein belongs to the GlnD family. Requires Mg(2+) as cofactor.

The enzyme catalyses [protein-PII]-L-tyrosine + UTP = [protein-PII]-uridylyl-L-tyrosine + diphosphate. The catalysed reaction is [protein-PII]-uridylyl-L-tyrosine + H2O = [protein-PII]-L-tyrosine + UMP + H(+). Uridylyltransferase (UTase) activity is inhibited by glutamine, while glutamine activates uridylyl-removing (UR) activity. Modifies, by uridylylation and deuridylylation, the PII regulatory proteins (GlnB and homologs), in response to the nitrogen status of the cell that GlnD senses through the glutamine level. Under low glutamine levels, catalyzes the conversion of the PII proteins and UTP to PII-UMP and PPi, while under higher glutamine levels, GlnD hydrolyzes PII-UMP to PII and UMP (deuridylylation). Thus, controls uridylylation state and activity of the PII proteins, and plays an important role in the regulation of nitrogen assimilation and metabolism. In Legionella pneumophila subsp. pneumophila (strain Philadelphia 1 / ATCC 33152 / DSM 7513), this protein is Bifunctional uridylyltransferase/uridylyl-removing enzyme.